The sequence spans 370 residues: Glutamate 5-kinase (370 aa).

Lys17 provides a ligand contact to ATP. Residues Ser57, Asp144, and Asn156 each contribute to the substrate site. ATP-binding positions include Ser176–Asp177 and Thr220–Lys226. In terms of domain architecture, PUA spans Ser282–Pro360.

Belongs to the glutamate 5-kinase family.

Its subcellular location is the cytoplasm. The catalysed reaction is L-glutamate + ATP = L-glutamyl 5-phosphate + ADP. The protein operates within amino-acid biosynthesis; L-proline biosynthesis; L-glutamate 5-semialdehyde from L-glutamate: step 1/2. Functionally, catalyzes the transfer of a phosphate group to glutamate to form L-glutamate 5-phosphate. The protein is Glutamate 5-kinase of Mycolicibacterium gilvum (strain PYR-GCK) (Mycobacterium gilvum (strain PYR-GCK)).